A 144-amino-acid polypeptide reads, in one-letter code: Small ribosomal subunit protein uS19 (144 aa).

It belongs to the universal ribosomal protein uS19 family.

Its function is as follows. Protein S19 forms a complex with S13 that binds strongly to the 16S ribosomal RNA. This Aeropyrum pernix (strain ATCC 700893 / DSM 11879 / JCM 9820 / NBRC 100138 / K1) protein is Small ribosomal subunit protein uS19 (rps19).